A 257-amino-acid polypeptide reads, in one-letter code: Imidazole glycerol phosphate synthase subunit HisF (257 aa).

Residues D12 and D131 contribute to the active site.

The protein belongs to the HisA/HisF family. As to quaternary structure, heterodimer of HisH and HisF.

It localises to the cytoplasm. The catalysed reaction is 5-[(5-phospho-1-deoxy-D-ribulos-1-ylimino)methylamino]-1-(5-phospho-beta-D-ribosyl)imidazole-4-carboxamide + L-glutamine = D-erythro-1-(imidazol-4-yl)glycerol 3-phosphate + 5-amino-1-(5-phospho-beta-D-ribosyl)imidazole-4-carboxamide + L-glutamate + H(+). The protein operates within amino-acid biosynthesis; L-histidine biosynthesis; L-histidine from 5-phospho-alpha-D-ribose 1-diphosphate: step 5/9. Its function is as follows. IGPS catalyzes the conversion of PRFAR and glutamine to IGP, AICAR and glutamate. The HisF subunit catalyzes the cyclization activity that produces IGP and AICAR from PRFAR using the ammonia provided by the HisH subunit. The chain is Imidazole glycerol phosphate synthase subunit HisF from Marinobacter nauticus (strain ATCC 700491 / DSM 11845 / VT8) (Marinobacter aquaeolei).